The following is a 122-amino-acid chain: Large ribosomal subunit protein uL14 (122 aa).

Belongs to the universal ribosomal protein uL14 family. In terms of assembly, part of the 50S ribosomal subunit. Forms a cluster with proteins L3 and L19. In the 70S ribosome, L14 and L19 interact and together make contacts with the 16S rRNA in bridges B5 and B8.

Functionally, binds to 23S rRNA. Forms part of two intersubunit bridges in the 70S ribosome. The polypeptide is Large ribosomal subunit protein uL14 (Ruthia magnifica subsp. Calyptogena magnifica).